The primary structure comprises 505 residues: Catalase (505 aa).

Residues M1–A25 form a disordered region. Catalysis depends on residues H56 and N129. Residue Y339 coordinates heme.

This sequence belongs to the catalase family. In terms of assembly, homodimer. Heme serves as cofactor.

The enzyme catalyses 2 H2O2 = O2 + 2 H2O. In terms of biological role, decomposes hydrogen peroxide into water and oxygen; serves to protect cells from the toxic effects of hydrogen peroxide. The polypeptide is Catalase (katA) (Staphylococcus warneri).